A 208-amino-acid polypeptide reads, in one-letter code: MARYTGPSCRLCRREGSELFLKGERCYTDKCAIKRRSYPPGQHGQGRIKVSDYGVQLREKQKVRRIYGILENQFRGYFETADRMKGVTGENLLFILERRLDNVAYRLGFATSRDEARQLVRHGHFTLNGKKVNIPSLQVKAGDVLQLREKSRKVAAISESLEGVVRRGIPQWLELEKDAFKGTVKAMPVREDITMPIQEQLIVELYSK.

Residues 98-159 (RRLDNVAYRL…KSRKVAAISE (62 aa)) enclose the S4 RNA-binding domain.

Belongs to the universal ribosomal protein uS4 family. Part of the 30S ribosomal subunit. Contacts protein S5. The interaction surface between S4 and S5 is involved in control of translational fidelity.

Functionally, one of the primary rRNA binding proteins, it binds directly to 16S rRNA where it nucleates assembly of the body of the 30S subunit. Its function is as follows. With S5 and S12 plays an important role in translational accuracy. The protein is Small ribosomal subunit protein uS4 of Citrifermentans bemidjiense (strain ATCC BAA-1014 / DSM 16622 / JCM 12645 / Bem) (Geobacter bemidjiensis).